Here is a 514-residue protein sequence, read N- to C-terminus: Retron Vc95 probable ATPase (514 aa).

An ATP-binding motif is present at residues 92–99; the sequence is GNNGSGKS.

In terms of biological role, probable ATPase component of antiviral defense system retron Vc95, composed of a non-coding RNA (ncRNA), a reverse transcriptase (RT), this protein and a putative HNH endonuclease. Expression of retron Vc95 confers protection against bacteriophages T2, T4 and T6. At multiplicity of infection (MOI) of 0.02 cultures slow growth when infected with T4 but do not collapse, at MOI 2 cultures enter growth stasis. This chain is Retron Vc95 probable ATPase, found in Vibrio cholerae serotype O1 biovar El Tor.